The primary structure comprises 459 residues: Cysteine--tRNA ligase (459 aa).

Cys27 lines the Zn(2+) pocket. Residues 29-39 (VTVYDDCHIGH) carry the 'HIGH' region motif. Zn(2+) contacts are provided by Cys208, His233, and Glu237. The 'KMSKS' region signature appears at 265–269 (KMSKS). Lys268 is an ATP binding site.

This sequence belongs to the class-I aminoacyl-tRNA synthetase family. Monomer. It depends on Zn(2+) as a cofactor.

Its subcellular location is the cytoplasm. The enzyme catalyses tRNA(Cys) + L-cysteine + ATP = L-cysteinyl-tRNA(Cys) + AMP + diphosphate. In Francisella tularensis subsp. mediasiatica (strain FSC147), this protein is Cysteine--tRNA ligase.